The primary structure comprises 189 residues: Penicillin-binding protein activator LpoB (189 aa).

The signal sequence occupies residues Met-1–Gly-16. Cys-17 is lipidated: N-palmitoyl cysteine. Residue Cys-17 is the site of S-diacylglycerol cysteine attachment. Residues Pro-18–Lys-52 are disordered. Pro residues predominate over residues Ser-19–Glu-45.

This sequence belongs to the LpoB family. Interacts with PBP1b.

It localises to the cell outer membrane. Regulator of peptidoglycan synthesis that is essential for the function of penicillin-binding protein 1B (PBP1b). The sequence is that of Penicillin-binding protein activator LpoB from Photorhabdus laumondii subsp. laumondii (strain DSM 15139 / CIP 105565 / TT01) (Photorhabdus luminescens subsp. laumondii).